The sequence spans 144 residues: Nucleoside diphosphate kinase (144 aa).

Lys11, Phe59, Arg87, Thr93, Arg104, and Asn114 together coordinate ATP. Residue His117 is the Pros-phosphohistidine intermediate of the active site.

Belongs to the NDK family. In terms of assembly, homotetramer. Mg(2+) is required as a cofactor.

It is found in the cytoplasm. The enzyme catalyses a 2'-deoxyribonucleoside 5'-diphosphate + ATP = a 2'-deoxyribonucleoside 5'-triphosphate + ADP. The catalysed reaction is a ribonucleoside 5'-diphosphate + ATP = a ribonucleoside 5'-triphosphate + ADP. Major role in the synthesis of nucleoside triphosphates other than ATP. The ATP gamma phosphate is transferred to the NDP beta phosphate via a ping-pong mechanism, using a phosphorylated active-site intermediate. The sequence is that of Nucleoside diphosphate kinase from Aliivibrio fischeri (strain MJ11) (Vibrio fischeri).